Consider the following 109-residue polypeptide: Transcription initiation factor IIA subunit 2 (109 aa).

The protein belongs to the TFIIA subunit 2 family. As to quaternary structure, TFIIA is a heterodimer of the large unprocessed subunit 1 and a small subunit gamma. It was originally believed to be a heterotrimer of an alpha (p35), a beta (p19) and a gamma subunit (p12). Interacts with NCOA6 general coactivator. TFIIA forms a complex with TBP. Interacts with HSF1 (via transactivation domain). Part of TBP-based Pol II pre-initiation complex (PIC), in which Pol II core assembles with general transcription factors and other specific initiation factors including GTF2E1, GTF2E2, GTF2F1, GTF2F2, TCEA1, ERCC2, ERCC3, GTF2H2, GTF2H3, GTF2H4, GTF2H5, GTF2A1, GTF2A2, GTF2B and TBP; this large multi-subunit PIC complex mediates DNA unwinding and targets Pol II core to the transcription start site where the first phosphodiester bond forms.

It localises to the nucleus. Its function is as follows. TFIIA is a component of the transcription machinery of RNA polymerase II and plays an important role in transcriptional activation. TFIIA in a complex with TBP mediates transcriptional activity. This chain is Transcription initiation factor IIA subunit 2 (Gtf2a2), found in Rattus norvegicus (Rat).